The primary structure comprises 372 residues: Alanine dehydrogenase (372 aa).

Residues Arg15 and Lys75 each coordinate substrate. His96 serves as the catalytic Proton donor/acceptor. NAD(+)-binding positions include Ser134, 178 to 179 (IA), Asp198, Ser220, 239 to 240 (VL), 267 to 270 (IAID), Arg280, and 299 to 302 (VANM). The active-site Proton donor/acceptor is the Asp270.

This sequence belongs to the AlaDH/PNT family. Homohexamer.

The protein localises to the cytoplasm. The catalysed reaction is L-alanine + NAD(+) + H2O = pyruvate + NH4(+) + NADH + H(+). Its pathway is amino-acid degradation; L-alanine degradation via dehydrogenase pathway; NH(3) and pyruvate from L-alanine: step 1/1. With respect to regulation, inhibited by p-chloromercuribenzoate and HgCl(2) and by Cu(2+) and Pb(2+) salts, unaffected by amino acids such as D-alanine and beta-alanine or by nucleotides or nucleosides. Its function is as follows. Catalyzes the reversible reductive amination of pyruvate to L-alanine. Prefers L-alanine for oxidative deamination, other substrates are poorly reactive. In the other direction 2-oxobutyrate is almost as reactive as pyruvate. Ammonia is the sole amino donor for the reductive amination of pyruvate, NADPH is inert. Reductive amination proceeds through a sequential, ordered ternary-binary mechanism, where NADH binds first followed by ammonia and pyruvate; the products are released in the order L-alanine and NAD(+). A key factor in the assimilation of L-alanine as an energy source via the tricarboxylic acid cycle during sporulation. This is Alanine dehydrogenase (ald) from Lysinibacillus sphaericus (Bacillus sphaericus).